The sequence spans 492 residues: Glutamate--cysteine ligase A, chloroplastic (492 aa).

A disulfide bridge links Cys-156 with Cys-376.

It belongs to the carboxylate-amine ligase family. Glutamate--cysteine ligase type 2 subfamily. As to quaternary structure, homodimer or monomer when oxidized or reduced, respectively. The Cys-156-Cys-376 disulfide bridge is known to modulate the enzyme activity according to the redox status. The oxidized form constitutes the active enzyme.

It is found in the plastid. The protein localises to the chloroplast. The catalysed reaction is L-cysteine + L-glutamate + ATP = gamma-L-glutamyl-L-cysteine + ADP + phosphate + H(+). Its pathway is sulfur metabolism; glutathione biosynthesis; glutathione from L-cysteine and L-glutamate: step 1/2. The chain is Glutamate--cysteine ligase A, chloroplastic (GSH1-1) from Oryza sativa subsp. japonica (Rice).